The sequence spans 395 residues: uncharacterized protein (395 aa).

Disordered regions lie at residues 1–121, 136–187, 308–335, and 365–395; these read MLLP…TANS, MRMK…LDRN, QNNEDTIRKSVPPSREPGSKMMTVSKDE, and IQKFRKKYQKQLKKSQEEKKDDTKTAKNEGD. Residues 13–28 show a composition bias toward basic and acidic residues; that stretch reads PKGEAKSLVARERKSQ. Residues 64 to 73 show a composition bias toward basic residues; it reads KSAKLRRKKS. Basic and acidic residues predominate over residues 97–111; the sequence is SIEKKKEEMTSKLPE. The segment covering 144–164 has biased composition (polar residues); that stretch reads TSRMATKSDSSLETMPESSHN. A compositionally biased stretch (basic residues) spans 170-179; it reads KSRKSQRTRG. The span at 365-377 shows a compositional bias: basic residues; that stretch reads IQKFRKKYQKQLK. The segment covering 378–395 has biased composition (basic and acidic residues); that stretch reads KSQEEKKDDTKTAKNEGD.

This is an uncharacterized protein from Caenorhabditis elegans.